The chain runs to 429 residues: Serine hydroxymethyltransferase (429 aa).

(6S)-5,6,7,8-tetrahydrofolate-binding positions include L127 and 131–133 (GHL). Residue K236 is modified to N6-(pyridoxal phosphate)lysine. E252 lines the (6S)-5,6,7,8-tetrahydrofolate pocket.

The protein belongs to the SHMT family. Homodimer. Requires pyridoxal 5'-phosphate as cofactor.

It localises to the cytoplasm. The enzyme catalyses (6R)-5,10-methylene-5,6,7,8-tetrahydrofolate + glycine + H2O = (6S)-5,6,7,8-tetrahydrofolate + L-serine. It functions in the pathway one-carbon metabolism; tetrahydrofolate interconversion. Its pathway is amino-acid biosynthesis; glycine biosynthesis; glycine from L-serine: step 1/1. Its function is as follows. Catalyzes the reversible interconversion of serine and glycine with tetrahydrofolate (THF) serving as the one-carbon carrier. This reaction serves as the major source of one-carbon groups required for the biosynthesis of purines, thymidylate, methionine, and other important biomolecules. Also exhibits THF-independent aldolase activity toward beta-hydroxyamino acids, producing glycine and aldehydes, via a retro-aldol mechanism. The polypeptide is Serine hydroxymethyltransferase (Rhodospirillum centenum (strain ATCC 51521 / SW)).